Reading from the N-terminus, the 276-residue chain is Homeobox-leucine zipper protein HOX11 (276 aa).

The tract at residues 1–92 (MVDGHLEAST…DDGGSARKKL (92 aa)) is disordered. Polar residues predominate over residues 39–48 (LSSSPNNSAG). Over residues 58–73 (HGLGGNDAAPGGGGGD) the composition is skewed to gly residues. Positions 87–146 (SARKKLRLSKEQSAFLEESFKEHSTLNPKQKLALAKQLNLRPRQVEVWFQNRRARTKLKQ) form a DNA-binding region, homeobox. Positions 145–189 (KQTEVDCEYLKRCCETLTEENRRLQKELAELRALKTVHPFYMHLP) are leucine-zipper. The tract at residues 214 to 244 (AATSSTAAPPAAPSSGGIAATSSSSAAAAAA) is disordered.

Belongs to the HD-ZIP homeobox family. Class II subfamily. As to expression, expressed in stems, leaf sheaths and blades and panicles.

The protein localises to the nucleus. Probable transcription factor. In Oryza sativa subsp. indica (Rice), this protein is Homeobox-leucine zipper protein HOX11 (HOX11).